The sequence spans 326 residues: DNA-directed RNA polymerase subunit alpha (326 aa).

The alpha N-terminal domain (alpha-NTD) stretch occupies residues 1–231 (MQSNSLLKPR…DQLSVFADLE (231 aa)). The interval 245–326 (IDPVLLRPVD…WPPAGLEKLG (82 aa)) is alpha C-terminal domain (alpha-CTD).

Belongs to the RNA polymerase alpha chain family. As to quaternary structure, homodimer. The RNAP catalytic core consists of 2 alpha, 1 beta, 1 beta' and 1 omega subunit. When a sigma factor is associated with the core the holoenzyme is formed, which can initiate transcription.

The enzyme catalyses RNA(n) + a ribonucleoside 5'-triphosphate = RNA(n+1) + diphosphate. Functionally, DNA-dependent RNA polymerase catalyzes the transcription of DNA into RNA using the four ribonucleoside triphosphates as substrates. The chain is DNA-directed RNA polymerase subunit alpha from Aromatoleum aromaticum (strain DSM 19018 / LMG 30748 / EbN1) (Azoarcus sp. (strain EbN1)).